Reading from the N-terminus, the 389-residue chain is Succinate--CoA ligase [ADP-forming] subunit beta (389 aa).

The ATP-grasp domain occupies 9 to 244 (KKLFADYGLP…LTQEDPREAE (236 aa)). ATP is bound by residues K46, 53–55 (GRG), E99, A102, and E107. Mg(2+) contacts are provided by N199 and D213. Substrate is bound by residues N264 and 321 to 323 (GIV).

It belongs to the succinate/malate CoA ligase beta subunit family. Heterotetramer of two alpha and two beta subunits. Mg(2+) serves as cofactor.

It catalyses the reaction succinate + ATP + CoA = succinyl-CoA + ADP + phosphate. It carries out the reaction GTP + succinate + CoA = succinyl-CoA + GDP + phosphate. The protein operates within carbohydrate metabolism; tricarboxylic acid cycle; succinate from succinyl-CoA (ligase route): step 1/1. Functionally, succinyl-CoA synthetase functions in the citric acid cycle (TCA), coupling the hydrolysis of succinyl-CoA to the synthesis of either ATP or GTP and thus represents the only step of substrate-level phosphorylation in the TCA. The beta subunit provides nucleotide specificity of the enzyme and binds the substrate succinate, while the binding sites for coenzyme A and phosphate are found in the alpha subunit. The polypeptide is Succinate--CoA ligase [ADP-forming] subunit beta (Histophilus somni (strain 2336) (Haemophilus somnus)).